Reading from the N-terminus, the 105-residue chain is Malonate decarboxylase acyl carrier protein (105 aa).

An O-(phosphoribosyl dephospho-coenzyme A)serine modification is found at S28.

Belongs to the MdcC family. Post-translationally, covalently binds the prosthetic group of malonate decarboxylase.

The protein localises to the cytoplasm. In terms of biological role, subunit of malonate decarboxylase, it is an acyl carrier protein to which acetyl and malonyl thioester residues are bound via a 2'-(5''-phosphoribosyl)-3'-dephospho-CoA prosthetic group and turn over during the catalytic mechanism. This Xanthomonas campestris pv. campestris (strain 8004) protein is Malonate decarboxylase acyl carrier protein.